Here is a 428-residue protein sequence, read N- to C-terminus: 3-phosphoshikimate 1-carboxyvinyltransferase (428 aa).

3 residues coordinate 3-phosphoshikimate: Lys-21, Ser-22, and Arg-26. Residue Lys-21 participates in phosphoenolpyruvate binding. 2 residues coordinate phosphoenolpyruvate: Gly-91 and Arg-119. Residues Ser-164, Gln-166, Asp-311, and Lys-338 each coordinate 3-phosphoshikimate. Gln-166 contributes to the phosphoenolpyruvate binding site. Catalysis depends on Asp-311, which acts as the Proton acceptor. Phosphoenolpyruvate is bound by residues Arg-342 and Arg-383.

It belongs to the EPSP synthase family. In terms of assembly, monomer.

It localises to the cytoplasm. The catalysed reaction is 3-phosphoshikimate + phosphoenolpyruvate = 5-O-(1-carboxyvinyl)-3-phosphoshikimate + phosphate. It participates in metabolic intermediate biosynthesis; chorismate biosynthesis; chorismate from D-erythrose 4-phosphate and phosphoenolpyruvate: step 6/7. Functionally, catalyzes the transfer of the enolpyruvyl moiety of phosphoenolpyruvate (PEP) to the 5-hydroxyl of shikimate-3-phosphate (S3P) to produce enolpyruvyl shikimate-3-phosphate and inorganic phosphate. This chain is 3-phosphoshikimate 1-carboxyvinyltransferase, found in Campylobacter concisus (strain 13826).